The primary structure comprises 883 residues: Lethal(3)malignant brain tumor-like protein 3 (883 aa).

An interaction with RBPJ. Required for transcription repressor activity on Notch target genes region spans residues 1-64; it reads MTESASSTSG…VKKATATTTW (64 aa). Residues 146-156 are compositionally biased toward basic and acidic residues; that stretch reads HAKDKDQKDER. The tract at residues 146–223 is disordered; sequence HAKDKDQKDE…RGDSAVLKQG (78 aa). 2 stretches are compositionally biased toward acidic residues: residues 157–166 and 185–194; these read DGGEDNDEED and DDGEERDDEM. MBT repeat units lie at residues 232–332, 340–439, and 448–543; these read WCWA…LRPP, FNWQ…LITP, and FSWD…LQAP. Residues 549–593 form a CCHHC-type; degenerate zinc finger; that stretch reads LMEPSETGGCPTLGCRGVGHFKKSRYLGTQSGANCPYSEINLSKE. Residues 595–768 form a disordered region; it reads IFPDRLSGDT…TQQQAQTQQQ (174 aa). The span at 616-662 shows a compositional bias: basic and acidic residues; that stretch reads KRMDTRESSSSPETREKHANNFKEDSEKKKENEVKTSAEAKVVREEP. A Glycyl lysine isopeptide (Lys-Gly) (interchain with G-Cter in SUMO2) cross-link involves residue Lys-638. Low complexity-rich tracts occupy residues 663 to 742 and 749 to 768; these read TPSV…QQPQ and QPQQ…TQQQ. The 65-residue stretch at 811–875 folds into the SAM domain; the sequence is WSTDEVSEFI…FNSILMFKAA (65 aa).

In terms of assembly, interacts with RNF2. Interacts (via SAM domain) with SAMD1 (via SAM domain); the interaction mediates L3MBTL3 binding to chromatin. Interacts with RBPJ; the interaction is required for L3MBTL3 localization to chromatin and is impaired the Notch-derived peptides containing the intracellular domain (NICD). Interacts (via SAM domain) with KDM1A. Interacts with DCAF5. Interacts with DNMT1. Interacts with E2F1. Interacts with SOX2. Interacts with SFMBT1. As to expression, detected in hematopoietic progenitor cells in fetal liver. Detected in adult bone marrow, heart, brain, spleen, lung, liver, kidney and testis.

Its subcellular location is the nucleus. Functionally, is a negative regulator of Notch target genes expression, required for RBPJ-mediated transcriptional repression. It recruits KDM1A to Notch-responsive elements and promotes KDM1A-mediated H3K4me demethylation. Involved in the regulation of ubiquitin-dependent degradation of a set of methylated non-histone proteins, including SOX2. It acts as an adapter recruiting the CRL4-DCAF5 E3 ubiquitin ligase complex to methylated target proteins. Also involved in the regulation of ubiquitin-dependent degradation of methylated DNMT1 and E2F1. Required for normal maturation of myeloid progenitor cells. This chain is Lethal(3)malignant brain tumor-like protein 3, found in Mus musculus (Mouse).